Reading from the N-terminus, the 472-residue chain is Tyrosine--tRNA ligase, mitochondrial (472 aa).

L-tyrosine is bound at residue tyrosine 72. Residue aspartate 76 participates in ATP binding. Residues 77–86 (PTGDSLHVGH) carry the 'HIGH' region motif. The L-tyrosine site is built by aspartate 116, tyrosine 216, glutamine 220, aspartate 223, and glutamine 242. The ATP site is built by isoleucine 269 and lysine 279. The 'KMSKS' region signature appears at 276–280 (KLGKS). N6-acetyllysine occurs at positions 350 and 362.

Belongs to the class-I aminoacyl-tRNA synthetase family. In terms of assembly, homodimer.

The protein localises to the mitochondrion matrix. The catalysed reaction is tRNA(Tyr) + L-tyrosine + ATP = L-tyrosyl-tRNA(Tyr) + AMP + diphosphate + H(+). Catalyzes the attachment of tyrosine to tRNA(Tyr) in a two-step reaction: tyrosine is first activated by ATP to form Tyr-AMP and then transferred to the acceptor end of tRNA(Tyr). This Mus musculus (Mouse) protein is Tyrosine--tRNA ligase, mitochondrial (Yars2).